We begin with the raw amino-acid sequence, 45 residues long: uncharacterized protein (45 aa).

Positions 18–45 (RRGRIGVQPSPERRSEVVGPFPLARSLS) are disordered.

This is an uncharacterized protein from Homo sapiens (Human).